The chain runs to 508 residues: Aspartyl/glutamyl-tRNA(Asn/Gln) amidotransferase subunit B (508 aa).

This sequence belongs to the GatB/GatE family. GatB subfamily. Heterotrimer of A, B and C subunits.

The catalysed reaction is L-glutamyl-tRNA(Gln) + L-glutamine + ATP + H2O = L-glutaminyl-tRNA(Gln) + L-glutamate + ADP + phosphate + H(+). It carries out the reaction L-aspartyl-tRNA(Asn) + L-glutamine + ATP + H2O = L-asparaginyl-tRNA(Asn) + L-glutamate + ADP + phosphate + 2 H(+). In terms of biological role, allows the formation of correctly charged Asn-tRNA(Asn) or Gln-tRNA(Gln) through the transamidation of misacylated Asp-tRNA(Asn) or Glu-tRNA(Gln) in organisms which lack either or both of asparaginyl-tRNA or glutaminyl-tRNA synthetases. The reaction takes place in the presence of glutamine and ATP through an activated phospho-Asp-tRNA(Asn) or phospho-Glu-tRNA(Gln). The sequence is that of Aspartyl/glutamyl-tRNA(Asn/Gln) amidotransferase subunit B from Salinibacter ruber (strain DSM 13855 / M31).